Reading from the N-terminus, the 353-residue chain is UPF0421 protein YgaE (353 aa).

4 consecutive transmembrane segments (helical) span residues 20–40, 67–87, 103–123, and 125–145; these read LASW…IFAI, VFGL…VIVI, LVTV…FALI, and TSTV…FLPP.

Belongs to the UPF0421 family.

It localises to the cell membrane. The chain is UPF0421 protein YgaE (ygaE) from Bacillus subtilis (strain 168).